The following is a 245-amino-acid chain: Probable transcriptional regulatory protein NSE_0641 (245 aa).

Positions 1–22 are disordered; sequence MAGHSQYANIKHRKNAQDAKRA.

This sequence belongs to the TACO1 family.

It is found in the cytoplasm. The polypeptide is Probable transcriptional regulatory protein NSE_0641 (Neorickettsia sennetsu (strain ATCC VR-367 / Miyayama) (Ehrlichia sennetsu)).